Here is a 561-residue protein sequence, read N- to C-terminus: Methionine--tRNA ligase (561 aa).

The short motif at 11–21 (PYVNTVPHLGN) is the 'HIGH' region element. Zn(2+) contacts are provided by C143, C146, C156, and C159. ATP is bound at residue K334.

Belongs to the class-I aminoacyl-tRNA synthetase family. MetG type 1 subfamily. Zn(2+) is required as a cofactor.

Its subcellular location is the cytoplasm. The catalysed reaction is tRNA(Met) + L-methionine + ATP = L-methionyl-tRNA(Met) + AMP + diphosphate. Functionally, is required not only for elongation of protein synthesis but also for the initiation of all mRNA translation through initiator tRNA(fMet) aminoacylation. The protein is Methionine--tRNA ligase of Ignicoccus hospitalis (strain KIN4/I / DSM 18386 / JCM 14125).